The sequence spans 85 residues: Three-finger toxin MALT0044C (85 aa).

A signal peptide spans 1-21 (MKTLLLTLVVVTIVCLDLGNT). 4 disulfides stabilise this stretch: Cys24-Cys45, Cys38-Cys63, Cys67-Cys78, and Cys79-Cys84.

It belongs to the three-finger toxin family. Short-chain subfamily. As to expression, expressed by the venom gland.

The protein resides in the secreted. In Micrurus altirostris (Uruguayan coral snake), this protein is Three-finger toxin MALT0044C.